The chain runs to 182 residues: Transcription termination/antitermination protein NusG (182 aa).

The KOW domain maps to 130 to 161; it reads VGEVVRVNEGPFADFNGTVEEVDYEKSRLKVS.

This sequence belongs to the NusG family.

Participates in transcription elongation, termination and antitermination. The chain is Transcription termination/antitermination protein NusG from Vibrio vulnificus (strain CMCP6).